The sequence spans 207 residues: Ras-related protein Rab-8B (207 aa).

GTP is bound by residues Ser-17, Gly-18, Val-19, Gly-20, Lys-21, Thr-22, Cys-23, Thr-35, Ser-39, and Thr-40. Thr-22 provides a ligand contact to Mg(2+). 2 consecutive short sequence motifs (switch) follow at residues 31–45 (DAFNTTFISTIGIDF) and 63–80 (DTAGQERFRTITTAYYRG). 2 residues coordinate Mg(2+): Thr-40 and Asp-63. GTP is bound at residue Gly-66. Thr-72 is modified (phosphothreonine; by LRRK2). GTP-binding residues include Asn-121, Lys-122, Asp-124, Ala-152, and Lys-153. Phosphoserine is present on residues Ser-180 and Ser-183. Residue Cys-204 is modified to Cysteine methyl ester. A lipid anchor (S-geranylgeranyl cysteine) is attached at Cys-204. The propeptide at 205–207 (SLL) is removed in mature form.

It belongs to the small GTPase superfamily. Rab family. Associated with actin, delta-catenin and alpha and beta tubulins. Interacts with OTOF. Interacts with PEX5R. Interacts with RAB3IP. Interacts with VIM. Interacts with CDH1. Interacts with MICALL2. Interacts with GDI1, GDI2, CHML and CHM; phosphorylation at Thr-72 disrupts these interactions. Interacts with MICAL1. Mg(2+) serves as cofactor. Post-translationally, phosphorylation of Thr-72 in the switch II region by LRRK2 prevents the association of RAB regulatory proteins, including CHM, CHML and RAB GDP dissociation inhibitors GDI1 and GDI2.

The protein resides in the cell membrane. Its subcellular location is the cytoplasmic vesicle. It localises to the phagosome membrane. The protein localises to the endosome membrane. The enzyme catalyses GTP + H2O = GDP + phosphate + H(+). Regulated by guanine nucleotide exchange factors (GEFs) including RAB3IP/RABIN8 which promotes the exchange of bound GDP for free GTP. Regulated by GTPase activating proteins (GAPs) which increase the GTP hydrolysis activity. Inhibited by GDP dissociation inhibitors (GDIs). In terms of biological role, the small GTPases Rab are key regulators of intracellular membrane trafficking, from the formation of transport vesicles to their fusion with membranes. Rabs cycle between an inactive GDP-bound form and an active GTP-bound form that is able to recruit to membranes different sets of downstream effectors directly responsible for vesicle formation, movement, tethering and fusion. RAB8B may be involved in polarized vesicular trafficking and neurotransmitter release. May participate in cell junction dynamics in Sertoli cells. May also participate in the export of a subset of neosynthesized proteins through a Rab8-Rab10-Rab11-dependent endososomal export route. This chain is Ras-related protein Rab-8B, found in Mus musculus (Mouse).